The following is a 141-amino-acid chain: Transcription antitermination protein NusB (141 aa).

It belongs to the NusB family.

Functionally, involved in transcription antitermination. Required for transcription of ribosomal RNA (rRNA) genes. Binds specifically to the boxA antiterminator sequence of the ribosomal RNA (rrn) operons. The protein is Transcription antitermination protein NusB of Neisseria gonorrhoeae (strain ATCC 700825 / FA 1090).